We begin with the raw amino-acid sequence, 318 residues long: Putative HTH-type transcriptional regulatory protein TK0539 (318 aa).

Residues 131 to 189 enclose the HTH cro/C1-type domain; it reads LRELREKHGYSVNELAQLLGVSRKSLLNYERGEQAVSLDVAIQLEEIFDEALAEPIDIL. The H-T-H motif DNA-binding region spans 142–161; the sequence is VNELAQLLGVSRKSLLNYER.

The polypeptide is Putative HTH-type transcriptional regulatory protein TK0539 (Thermococcus kodakarensis (strain ATCC BAA-918 / JCM 12380 / KOD1) (Pyrococcus kodakaraensis (strain KOD1))).